We begin with the raw amino-acid sequence, 320 residues long: Cell-cell adhesion glycoprotein 64 (320 aa).

Residues 1–19 form the signal peptide; sequence MNKFITLFVLLASVSVAMS. 9 disulfides stabilise this stretch: cysteine 39/cysteine 57, cysteine 67/cysteine 79, cysteine 73/cysteine 86, cysteine 98/cysteine 110, cysteine 104/cysteine 115, cysteine 123/cysteine 138, cysteine 132/cysteine 147, cysteine 157/cysteine 171, and cysteine 165/cysteine 176. Asparagine 49 carries N-linked (GlcNAc...) asparagine glycosylation. Asparagine 80 carries N-linked (GlcNAc...) asparagine glycosylation. N-linked (GlcNAc...) asparagine glycans are attached at residues asparagine 141 and asparagine 158. Asparagine 187 carries an N-linked (GlcNAc...) asparagine glycan. Cystine bridges form between cysteine 188–cysteine 202 and cysteine 194–cysteine 207. N-linked (GlcNAc...) asparagine glycosylation occurs at asparagine 216. 4 cysteine pairs are disulfide-bonded: cysteine 226–cysteine 246, cysteine 232–cysteine 234, cysteine 266–cysteine 285, and cysteine 270–cysteine 281. A lipid anchor (GPI-like-anchor amidated serine) is attached at serine 298. Positions 299-320 are cleaved as a propeptide — removed in mature form; that stretch reads SATTIAFNAFVVFAIVLSVLLF.

Post-translationally, contains 18 disulfide bonds. The GPI-like-anchor contains a phosphoceramide group, rather than a phosphatidyl group.

Its subcellular location is the cell membrane. Its function is as follows. Cell-cell adhesion during development. The polypeptide is Cell-cell adhesion glycoprotein 64 (Heterostelium pallidum (Cellular slime mold)).